A 353-amino-acid chain; its full sequence is Photosystem II D2 protein (353 aa).

Thr-2 bears the N-acetylthreonine mark. Position 2 is a phosphothreonine (Thr-2). The chain crosses the membrane as a helical span at residues 41–61; that stretch reads CAYFALGGWLTGTTFVTSWYT. A chlorophyll a-binding site is contributed by His-118. Residues 125–141 form a helical membrane-spanning segment; the sequence is GFMLRQFEIARSVGLRP. The pheophytin a site is built by Gln-130 and Asn-143. The helical transmembrane segment at 153 to 166 threads the bilayer; it reads VFVSVFLIYPLGQS. His-198 is a chlorophyll a binding site. Residues 208-228 form a helical membrane-spanning segment; sequence AALLCAIHGATVENTIFEDGD. His-215 and Phe-262 together coordinate a plastoquinone. His-215 serves as a coordination point for Fe cation. Residue His-269 coordinates Fe cation. Residues 279-295 form a helical membrane-spanning segment; it reads GLWMSAIGVVGLALNLR.

This sequence belongs to the reaction center PufL/M/PsbA/D family. As to quaternary structure, PSII is composed of 1 copy each of membrane proteins PsbA, PsbB, PsbC, PsbD, PsbE, PsbF, PsbH, PsbI, PsbJ, PsbK, PsbL, PsbM, PsbT, PsbX, PsbY, PsbZ, Psb30/Ycf12, at least 3 peripheral proteins of the oxygen-evolving complex and a large number of cofactors. It forms dimeric complexes. Requires The D1/D2 heterodimer binds P680, chlorophylls that are the primary electron donor of PSII, and subsequent electron acceptors. It shares a non-heme iron and each subunit binds pheophytin, quinone, additional chlorophylls, carotenoids and lipids. There is also a Cl(-1) ion associated with D1 and D2, which is required for oxygen evolution. The PSII complex binds additional chlorophylls, carotenoids and specific lipids. as cofactor.

It is found in the plastid. It localises to the chloroplast thylakoid membrane. The catalysed reaction is 2 a plastoquinone + 4 hnu + 2 H2O = 2 a plastoquinol + O2. Its function is as follows. Photosystem II (PSII) is a light-driven water:plastoquinone oxidoreductase that uses light energy to abstract electrons from H(2)O, generating O(2) and a proton gradient subsequently used for ATP formation. It consists of a core antenna complex that captures photons, and an electron transfer chain that converts photonic excitation into a charge separation. The D1/D2 (PsbA/PsbD) reaction center heterodimer binds P680, the primary electron donor of PSII as well as several subsequent electron acceptors. D2 is needed for assembly of a stable PSII complex. This Staurastrum punctulatum (Green alga) protein is Photosystem II D2 protein.